Consider the following 904-residue polypeptide: DNA polymerase I (904 aa).

A 5'-3' exonuclease domain is found at 186 to 279 (TPRQYPDFAA…DTLRLQPWDR (94 aa)). A 3'-5' exonuclease domain is found at 317 to 493 (RGGALAPGTV…LADALDAELA (177 aa)).

The protein belongs to the DNA polymerase type-A family. As to quaternary structure, single-chain monomer with multiple functions.

The catalysed reaction is DNA(n) + a 2'-deoxyribonucleoside 5'-triphosphate = DNA(n+1) + diphosphate. Its function is as follows. In addition to polymerase activity, this DNA polymerase exhibits 3'-5' and 5'-3' exonuclease activity. This Mycobacterium bovis (strain ATCC BAA-935 / AF2122/97) protein is DNA polymerase I (polA).